We begin with the raw amino-acid sequence, 123 residues long: Protein HesB, heterocyst (123 aa).

This sequence belongs to the HesB/IscA family.

Its function is as follows. May be required for efficient nitrogen fixation. The chain is Protein HesB, heterocyst (hesB1) from Trichormus variabilis (strain ATCC 29413 / PCC 7937) (Anabaena variabilis).